The sequence spans 425 residues: UDP-N-acetylglucosamine 1-carboxyvinyltransferase (425 aa).

23–24 (KN) lines the phosphoenolpyruvate pocket. Residue Arg100 participates in UDP-N-acetyl-alpha-D-glucosamine binding. Cys124 acts as the Proton donor in catalysis. Cys124 is subject to 2-(S-cysteinyl)pyruvic acid O-phosphothioketal. Positions 313 and 335 each coordinate UDP-N-acetyl-alpha-D-glucosamine.

The protein belongs to the EPSP synthase family. MurA subfamily.

The protein resides in the cytoplasm. It catalyses the reaction phosphoenolpyruvate + UDP-N-acetyl-alpha-D-glucosamine = UDP-N-acetyl-3-O-(1-carboxyvinyl)-alpha-D-glucosamine + phosphate. Its pathway is cell wall biogenesis; peptidoglycan biosynthesis. Functionally, cell wall formation. Adds enolpyruvyl to UDP-N-acetylglucosamine. The polypeptide is UDP-N-acetylglucosamine 1-carboxyvinyltransferase (Wolbachia sp. subsp. Brugia malayi (strain TRS)).